The following is a 972-amino-acid chain: MSTSKATATYLRSIMLPENGPASIPDDITERHILKQETSSYNLEVSESGSGLLVCFPGAPGSRVGAHYRWNLNQTALEFDQWLETSQDLKKAFNYGRLISRKYDIQSSTLPAGLYALNGTLNAATFEGSLSEVESLTYNSLMSLTTNPQDKVNNQLVTKGITVLNLPTGFDKPYVRLEDETPQGPQSMNGARMRCTAAIAPRRYEIDLPSERLPTVAATGTPTTIYEGNADIVNSTAVTGDITFQLEAEPVNETRFDFILQFLGLDNDVPVVTVTSSTLVTADNYRGASAKFTQSIPTEMITKPITRVKLAYQLNQQTAIANAATLGAKGPASVSFSSGNGNVPGVLRPITLVAYEKMTPQSILTVAGVSNYELIPNPDLLKNMVTKYGKYDPEGLNYAKMILSHREELDIRTVWRTEEYKERTRAFKEITDFTSDLPTSKAWGWRDLVRGIRKVAAPVLSTLFPMAAPLIGAADQFIGDLTKTNSAGGRYLSHAAGGRYHDVMDSWASGSEAGSYSKHLKTRLESNNYEEVELPKPTKGVIFPVVHTVESAPGEAFGSLVVVIPEAYPELLDPNQQVLSYFKNDTGCVWGIGEDIPFEGDDMCYTALPLKEIKRNGNIVVEKIFAGPAMGPSSQLALSLLVNDIDEGIPRMVFTGEIADDEETVIPICGVDIKAIAAHEHGLPLIGCQPGVDEMVANTSLASHLIQGGALPVQKAQGACRRIKYLGQLMRTTASGMDAELQGLLQATMARAKEVKDAEVFKLLKLMSWTRKNDLTDHMYEWSKEDPDAIKFGRLVSTPPKHQEKPKGPDQHTAQEAKATRISLDAVKAGADFASPEWIAENNYRGPSPGQFKYYMITGRVPNPGEEYEDYVRKPITRPTDMDKIRRLANSVYGLPHQEPAPDDFYQAVVEVFAENGGRGPDQDQMQDLRDLARQMKRRPRPAETRRQTKTPPRAATSSGSRFTPSGDDGEV.

Asp-26 provides a ligand contact to a divalent metal cation. Positions 509–734 constitute a Peptidase S50 domain; it reads SGSEAGSYSK…YLGQLMRTTA (226 aa). Catalysis depends on Ser-633, which acts as the Nucleophile. Lys-674 is an active-site residue. Disordered stretches follow at residues 797 to 817 and 917 to 972; these read STPP…AQEA and GGRG…DGEV. Residues 801 to 817 are compositionally biased toward basic and acidic residues; it reads KHQEKPKGPDQHTAQEA.

Homotrimer. A central divalent metal (possibly cobalt) stabilizes the VP2 trimer. In terms of assembly, homodimer. interacts (via C-terminus) with VP1 in the cytoplasm. Interacts with VP2. Specific enzymatic cleavages yield mature proteins. Capsid assembly seems to be regulated by polyprotein processing. The protease VP4 cleaves itself off the polyprotein, thus releasing pre-VP2 and VP3 within the infected cell. During capsid assembly, the C-terminus of pre-VP2 is further processed by VP4, giving rise to VP2, the external capsid protein and three small peptides that all stay closely associated with the capsid.

It localises to the virion. Its subcellular location is the host cytoplasm. Capsid protein VP2 self assembles to form an icosahedral capsid with a T=13 symmetry, about 70 nm in diameter, and consisting of 260 VP2 trimers. The capsid encapsulates the genomic dsRNA. VP2 is also involved in attachment and entry into the host cell. Functionally, the precursor of VP2 plays an important role in capsid assembly. First, pre-VP2 and VP2 oligomers assemble to form a procapsid. Then, the pre-VP2 intermediates may be processed into VP2 proteins by proteolytic cleavage mediated by VP4 to obtain the mature virion. The final capsid is composed of pentamers and hexamers but VP2 has a natural tendency to assemble into all-pentameric structures. Therefore pre-VP2 may be required to allow formation of the hexameric structures. Its function is as follows. Protease VP4 is a serine protease that cleaves the polyprotein into its final products. Pre-VP2 is first partially cleaved, and may be completely processed by VP4 upon capsid maturation. In terms of biological role, capsid protein VP3 plays a key role in virion assembly by providing a scaffold for the capsid composed of VP2. May self-assemble to form a T=4-like icosahedral inner-capsid composed of at least 180 trimers. Plays a role in genomic RNA packaging by recruiting VP1 into the capsid and interacting with the dsRNA genome segments to form a ribonucleoprotein complex. Additionally, the interaction of the VP3 C-terminal tail with VP1 removes the inherent structural blockade of the polymerase active site. Thus, VP3 can also function as a transcriptional activator. Structural peptide 1 is a small peptide derived from the C-terminus of pre-VP2. It destabilizes and perforates cell membranes, suggesting a role during viral entry. Functionally, structural peptide 2 is a small peptide derived from the C-terminus of pre-VP2. It is not essential for virus viability, but viral growth is affected when this protein is absent. Its function is as follows. Structural peptide 3 is a small peptide derived from pre-VP2 C-terminus. It is not essential for virus viability, but viral growth is affected when this protein is absent. In Oncorhynchus mykiss (Rainbow trout), this protein is Structural polyprotein.